The following is a 481-amino-acid chain: Tryptophan biosynthesis protein TrpCF (481 aa).

Residues 1–283 are indole-3-glycerol phosphate synthase; it reads MKMTDFNTQQ…LAVRKVTLGE (283 aa). An N-(5'-phosphoribosyl)anthranilate isomerase region spans residues 284 to 481; it reads NKVCGLTHPD…QAAFHAIRNY (198 aa).

The protein in the N-terminal section; belongs to the TrpC family. In the C-terminal section; belongs to the TrpF family. Monomer.

The catalysed reaction is N-(5-phospho-beta-D-ribosyl)anthranilate = 1-(2-carboxyphenylamino)-1-deoxy-D-ribulose 5-phosphate. It catalyses the reaction 1-(2-carboxyphenylamino)-1-deoxy-D-ribulose 5-phosphate + H(+) = (1S,2R)-1-C-(indol-3-yl)glycerol 3-phosphate + CO2 + H2O. It functions in the pathway amino-acid biosynthesis; L-tryptophan biosynthesis; L-tryptophan from chorismate: step 3/5. The protein operates within amino-acid biosynthesis; L-tryptophan biosynthesis; L-tryptophan from chorismate: step 4/5. Its function is as follows. Bifunctional enzyme that catalyzes two sequential steps of tryptophan biosynthetic pathway. The first reaction is catalyzed by the isomerase, coded by the TrpF domain; the second reaction is catalyzed by the synthase, coded by the TrpC domain. In Vibrio parahaemolyticus serotype O3:K6 (strain RIMD 2210633), this protein is Tryptophan biosynthesis protein TrpCF (trpC).